The sequence spans 202 residues: Ribosome maturation factor RimM (202 aa).

A PRC barrel domain is found at 100–195; it reads ADEWYPKDLI…YLTLDPPGGL (96 aa).

This sequence belongs to the RimM family. In terms of assembly, binds ribosomal protein uS19.

Its subcellular location is the cytoplasm. In terms of biological role, an accessory protein needed during the final step in the assembly of 30S ribosomal subunit, possibly for assembly of the head region. Essential for efficient processing of 16S rRNA. May be needed both before and after RbfA during the maturation of 16S rRNA. It has affinity for free ribosomal 30S subunits but not for 70S ribosomes. This is Ribosome maturation factor RimM from Bifidobacterium longum (strain NCC 2705).